Here is a 135-residue protein sequence, read N- to C-terminus: MPKSYTELYFPILLQAVIAMGLAAGLLTVSYLLGKKVRNRVKDMPYESGIVPTGDARHRFSVKFYLVGMLFILFDIEAIFLYPWVVVYRDLSRNGSLFGFYEMLTFVILILSGFFYIWKKGALDWGEPTARPGRK.

3 helical membrane passes run 9 to 29 (YFPI…LLTV), 67 to 87 (VGML…WVVV), and 97 to 117 (LFGF…FFYI).

Belongs to the complex I subunit 3 family. As to quaternary structure, NDH-1 is composed of 14 different subunits. Subunits NuoA, H, J, K, L, M, N constitute the membrane sector of the complex.

The protein resides in the cell inner membrane. It catalyses the reaction a quinone + NADH + 5 H(+)(in) = a quinol + NAD(+) + 4 H(+)(out). Functionally, NDH-1 shuttles electrons from NADH, via FMN and iron-sulfur (Fe-S) centers, to quinones in the respiratory chain. The immediate electron acceptor for the enzyme in this species is believed to be ubiquinone. Couples the redox reaction to proton translocation (for every two electrons transferred, four hydrogen ions are translocated across the cytoplasmic membrane), and thus conserves the redox energy in a proton gradient. This is NADH-quinone oxidoreductase subunit A from Solibacter usitatus (strain Ellin6076).